Reading from the N-terminus, the 141-residue chain is Nucleoside diphosphate kinase (141 aa).

ATP is bound by residues K11, F59, R87, T93, R104, and N114. Residue H117 is the Pros-phosphohistidine intermediate of the active site.

Belongs to the NDK family. In terms of assembly, homotetramer. Requires Mg(2+) as cofactor.

The protein localises to the cytoplasm. The catalysed reaction is a 2'-deoxyribonucleoside 5'-diphosphate + ATP = a 2'-deoxyribonucleoside 5'-triphosphate + ADP. It carries out the reaction a ribonucleoside 5'-diphosphate + ATP = a ribonucleoside 5'-triphosphate + ADP. Major role in the synthesis of nucleoside triphosphates other than ATP. The ATP gamma phosphate is transferred to the NDP beta phosphate via a ping-pong mechanism, using a phosphorylated active-site intermediate. This Burkholderia ambifaria (strain MC40-6) protein is Nucleoside diphosphate kinase.